Reading from the N-terminus, the 282-residue chain is Fused uL13/uS9 ribosomal subunit protein (282 aa).

The interval 1–141 is large ribosomal subunit protein uL13; the sequence is MLLMIINGEG…LGEISELLGA (141 aa). A small ribosomal subunit protein uS9 region spans residues 150–282; the sequence is MKKVIHTSGK…ARARRQKSYR (133 aa). A disordered region spans residues 259–282; the sequence is DPRRSEPKKYGGRGARARRQKSYR. The span at 273-282 shows a compositional bias: basic residues; it reads ARARRQKSYR.

It in the N-terminal section; belongs to the universal ribosomal protein uL13 family. This sequence in the C-terminal section; belongs to the universal ribosomal protein uS9 family. In terms of assembly, L13 is part of the 50S ribosomal subunit. S9 is part of the 30S ribosomal subunit.

L13 protein is one of the early assembly proteins of the 50S ribosomal subunit, although it is not seen to bind rRNA by itself. It is important during the early stages of 50S assembly. This is Fused uL13/uS9 ribosomal subunit protein (rpl13/rps9) from Methanothermobacter thermautotrophicus (strain ATCC 29096 / DSM 1053 / JCM 10044 / NBRC 100330 / Delta H) (Methanobacterium thermoautotrophicum).